Consider the following 3085-residue polypeptide: Genome polyprotein (3085 aa).

A Peptidase S30 domain is found at 170–313 (LVAKSDFDDL…AGDVGRTMHY (144 aa)). Residues His224, Glu233, and Ser266 each act as for P1 proteinase activity in the active site. An Involved in interaction with stylet and aphid transmission motif is present at residues 365–368 (KMAC). The short motif at 622–624 (PTK) is the Involved in virions binding and aphid transmission element. The 123-residue stretch at 648–770 (MYIAKEGYCY…EGEMKWYRVG (123 aa)) folds into the Peptidase C6 domain. Active-site for helper component proteinase activity residues include Cys656 and His729. Residues 1241–1393 (TICASSEQEF…TQHDVLIKIE (153 aa)) enclose the Helicase ATP-binding domain. 1254–1261 (GAVGSGKS) serves as a coordination point for ATP. The DESH box signature appears at 1343-1346 (DESH). The Helicase C-terminal domain occupies 1412 to 1571 (DVVQNGDNIL…NLPVMTHNVT (160 aa)). The short motif at 1895-1904 (ERGKRKGNNS) is the Nuclear localization signal element. Tyr1919 is subject to O-(5'-phospho-RNA)-tyrosine. The Peptidase C4 domain occupies 2047-2266 (GKSIVKGLRN…VAWNGMTLRE (220 aa)). Catalysis depends on for nuclear inclusion protein A activity residues His2092, Asp2127, and Cys2198. Positions 2535–2659 (WIYCDADGSQ…AIYPSKEKFL (125 aa)) constitute a RdRp catalytic domain. Residues 2801 to 2869 (DGPDIVTYQG…STAVPRLKQI (69 aa)) are disordered. A compositionally biased stretch (low complexity) spans 2816–2831 (KSSQPQSSSPQVPQQV). Residues 2839 to 2855 (GRDKQSVIKHDSTKSKD) are compositionally biased toward basic and acidic residues. Residue Thr3068 is modified to Phosphothreonine.

It belongs to the potyviridae genome polyprotein family. As to quaternary structure, interacts with host eIF4E protein (via cap-binding region); this interaction mediates the translation of the VPg-viral RNA conjugates. Part of a complex that comprises VPg, RNA, host EIF4E and EIF4G; this interaction mediates the translation of the VPg-viral RNA conjugates. VPg is uridylylated by the polymerase and is covalently attached to the 5'-end of the genomic RNA. This uridylylated form acts as a nucleotide-peptide primer for the polymerase. Post-translationally, potyviral RNA is expressed as two polyproteins which undergo post-translational proteolytic processing. Genome polyprotein is processed by NIa-pro, P1 and HC-pro proteinases resulting in the production of at least ten individual proteins. P3N-PIPO polyprotein is cleaved by P1 and HC-pro proteinases resulting in the production of three individual proteins. The P1 proteinase and the HC-pro cleave only their respective C-termini autocatalytically. 6K1 is essential for proper proteolytic separation of P3 from CI.

Its subcellular location is the host cytoplasmic vesicle. The protein resides in the host nucleus. It is found in the virion. It catalyses the reaction RNA(n) + a ribonucleoside 5'-triphosphate = RNA(n+1) + diphosphate. The catalysed reaction is Hydrolyzes glutaminyl bonds, and activity is further restricted by preferences for the amino acids in P6 - P1' that vary with the species of potyvirus, e.g. Glu-Xaa-Xaa-Tyr-Xaa-Gln-|-(Ser or Gly) for the enzyme from tobacco etch virus. The natural substrate is the viral polyprotein, but other proteins and oligopeptides containing the appropriate consensus sequence are also cleaved.. It carries out the reaction Hydrolyzes a Gly-|-Gly bond at its own C-terminus, commonly in the sequence -Tyr-Xaa-Val-Gly-|-Gly, in the processing of the potyviral polyprotein.. Its function is as follows. Required for aphid transmission and also has proteolytic activity. Only cleaves a Gly-Gly dipeptide at its own C-terminus. Interacts with virions and aphid stylets. Acts as a suppressor of RNA-mediated gene silencing, also known as post-transcriptional gene silencing (PTGS), a mechanism of plant viral defense that limits the accumulation of viral RNAs. May have RNA-binding activity. In terms of biological role, has helicase activity. It may be involved in replication. Indispensable for virus replication. Reduces the abundance of host transcripts related to jasmonic acid biosynthesis therefore altering the host defenses. In order to increase its own stability, decreases host protein degradation pathways. Functionally, indispensable for virus replication. Its function is as follows. Mediates the cap-independent, EIF4E-dependent translation of viral genomic RNAs. Binds to the cap-binding site of host EIF4E and thus interferes with the host EIF4E-dependent mRNA export and translation. VPg-RNA directly binds EIF4E and is a template for transcription. Also forms trimeric complexes with EIF4E-EIF4G, which are templates for translation. In terms of biological role, has RNA-binding and proteolytic activities. An RNA-dependent RNA polymerase that plays an essential role in the virus replication. Functionally, involved in aphid transmission, cell-to-cell and systemis movement, encapsidation of the viral RNA and in the regulation of viral RNA amplification. The chain is Genome polyprotein from Beet mosaic virus (BtMV).